Here is a 162-residue protein sequence, read N- to C-terminus: MTDLYIDADACPVKAEAERVAVRHGVRMFLVSNGGIRPPAHPLVESIFVPEGPDVADMWIADRARTGDVVVTSDIPLAAKVVAAGALVVKPNGETLTQANIGNALATRDLMADLRSADPFRQGGGRPFSKADRSRFLDALERAMRKAQEAGRSASGGNEAGS.

Belongs to the UPF0178 family.

This Cereibacter sphaeroides (strain ATCC 17023 / DSM 158 / JCM 6121 / CCUG 31486 / LMG 2827 / NBRC 12203 / NCIMB 8253 / ATH 2.4.1.) (Rhodobacter sphaeroides) protein is UPF0178 protein RHOS4_24670.